The following is a 258-amino-acid chain: Indole-3-glycerol phosphate synthase (258 aa).

Belongs to the TrpC family.

It catalyses the reaction 1-(2-carboxyphenylamino)-1-deoxy-D-ribulose 5-phosphate + H(+) = (1S,2R)-1-C-(indol-3-yl)glycerol 3-phosphate + CO2 + H2O. It functions in the pathway amino-acid biosynthesis; L-tryptophan biosynthesis; L-tryptophan from chorismate: step 4/5. The protein is Indole-3-glycerol phosphate synthase of Legionella pneumophila (strain Paris).